Here is a 371-residue protein sequence, read N- to C-terminus: MEVPTLSKTRKPPDLNEESLDLGIMIALFEIGSIPPVSCSSLPSLKSSDHEATEQRIAKKFESLLKEIKDIVKHVTSYEQKVTETKEPFKETNMFEVSELREKIIELDEINKELVKKLLASLDLGKKENAKKQEMRLDNQNSEDTVQDCSGDLVNCSKGQKALPETQLSKEKAKHGFPHIQEENIRLRNNMERLLQEAEHWSVEHTELSKLIKSYQKSQNDIKTLKNNGTHSPTQTNNESAKQELEEQVKRLKEDTYSLHLIATLLENECQILEQRVELLDELHHQKEEPLQGEPMQINHEQSDKEQKLPEAEKVKIHEKNMPEVEGTFHKRDQFFTSLDICHNKKAHNNQFNTRIAKRALVVKRPASSLS.

Coiled coils occupy residues 96-148 and 177-289; these read EVSE…TVQD and FPHI…QKEE. S98 bears the Phosphoserine mark. The interval 110-120 is helix-loop-helix motif; that stretch reads INKELVKKLLA. Positions 121–188 are basic motif; the sequence is SLDLGKKENA…HIQEENIRLR (68 aa). S202 is subject to Phosphoserine. A compositionally biased stretch (polar residues) spans 223–240; the sequence is KTLKNNGTHSPTQTNNES. Residues 223–246 form a disordered region; that stretch reads KTLKNNGTHSPTQTNNESAKQELE. A leucine-zipper region spans residues 245–266; it reads LEEQVKRLKEDTYSLHLIATLL.

Post-translationally, phosphorylated by MAPK1/ERK2 and MAPK3/ERK1.

The protein localises to the cytoplasm. The protein resides in the nucleus. Functionally, transcription factor that binds to the DNA sequence 5'-CANNTG-3'(E box) and the G-box motif. May play an important role in the regulation of cell proliferation and differentiation during spermatogenesis. The sequence is that of Spermatogenic leucine zipper protein 1 (SPZ1) from Bos taurus (Bovine).